Here is a 165-residue protein sequence, read N- to C-terminus: Growth arrest and DNA damage-inducible protein GADD45 alpha (165 aa).

Thr2 carries the post-translational modification Phosphothreonine.

Belongs to the GADD45 family. In terms of assembly, interacts with AURKA, PCNA, GADD45GIP1 and MAPK14.

The protein resides in the nucleus. Functionally, might affect PCNA interaction with some CDK (cell division protein kinase) complexes; stimulates DNA excision repair in vitro and inhibits entry of cells into S phase. In T-cells, functions as a regulator of p38 MAPKs by inhibiting p88 phosphorylation and activity. This Bos taurus (Bovine) protein is Growth arrest and DNA damage-inducible protein GADD45 alpha (GADD45A).